A 345-amino-acid polypeptide reads, in one-letter code: Methylthioribose-1-phosphate isomerase (345 aa).

Residues 44-46 (RGA), arginine 86, and glutamine 194 each bind substrate. Aspartate 235 acts as the Proton donor in catalysis. 245–246 (NK) lines the substrate pocket.

The protein belongs to the eIF-2B alpha/beta/delta subunits family. MtnA subfamily.

The catalysed reaction is 5-(methylsulfanyl)-alpha-D-ribose 1-phosphate = 5-(methylsulfanyl)-D-ribulose 1-phosphate. It participates in amino-acid biosynthesis; L-methionine biosynthesis via salvage pathway; L-methionine from S-methyl-5-thio-alpha-D-ribose 1-phosphate: step 1/6. Functionally, catalyzes the interconversion of methylthioribose-1-phosphate (MTR-1-P) into methylthioribulose-1-phosphate (MTRu-1-P). The protein is Methylthioribose-1-phosphate isomerase of Desulfitobacterium hafniense (strain Y51).